The primary structure comprises 1050 residues: Self-sufficient cytochrome P450 monooxygenase CYP505E3 (1050 aa).

Cysteine 406 serves as a coordination point for heme. A compositionally biased stretch (polar residues) spans 459-481; that stretch reads RGQSATGLSQGSMSASGATSSVA. The disordered stretch occupies residues 459-495; it reads RGQSATGLSQGSMSASGATSSVASPGPPAATGAQSNP. The Flavodoxin-like domain maps to 501 to 641; it reads ISFFYGSNSG…DLELWEETNL (141 aa). FMN-binding positions include 507–511 and 585–617; these read SNSGT and VFGCGHHDWAKTFYRIPILIDDLMHKAGATRLT. Residues 679–907 form the FAD-binding FR-type domain; that stretch reads RGLVEAKVTA…RPAKDAFHLP (229 aa).

It in the N-terminal section; belongs to the cytochrome P450 family. The cofactor is FAD. It depends on FMN as a cofactor. Heme is required as a cofactor.

The enzyme catalyses 2 oxidized [cytochrome P450] + NADPH = 2 reduced [cytochrome P450] + NADP(+) + H(+). The catalysed reaction is an organic molecule + reduced [NADPH--hemoprotein reductase] + O2 = an alcohol + oxidized [NADPH--hemoprotein reductase] + H2O + H(+). It carries out the reaction decane + reduced [NADPH--hemoprotein reductase] + O2 = 3-decanol + oxidized [NADPH--hemoprotein reductase] + H2O + H(+). It catalyses the reaction dodecane + reduced [NADPH--hemoprotein reductase] + O2 = 5-dodecanol + oxidized [NADPH--hemoprotein reductase] + H2O + H(+). The enzyme catalyses tetradecane + reduced [NADPH--hemoprotein reductase] + O2 = 7-tetradecanol + oxidized [NADPH--hemoprotein reductase] + H2O + H(+). The catalysed reaction is hexadecane + reduced [NADPH--hemoprotein reductase] + O2 = 9-hexadecanol + oxidized [NADPH--hemoprotein reductase] + H2O + H(+). It carries out the reaction dodecanoate + reduced [NADPH--hemoprotein reductase] + O2 = 5-hydroxydodecanoate + oxidized [NADPH--hemoprotein reductase] + H2O + H(+). It catalyses the reaction tetradecanoate + reduced [NADPH--hemoprotein reductase] + O2 = 7-hydroxytetradecanoate + oxidized [NADPH--hemoprotein reductase] + H2O + H(+). The enzyme catalyses hexadecanoate + reduced [NADPH--hemoprotein reductase] + O2 = 9-hydroxyhexadecanoate + oxidized [NADPH--hemoprotein reductase] + H2O + H(+). The catalysed reaction is decan-1-ol + reduced [NADPH--hemoprotein reductase] + O2 = 1,3-decanediol + oxidized [NADPH--hemoprotein reductase] + H2O + H(+). It carries out the reaction decan-1-ol + reduced [NADPH--hemoprotein reductase] + O2 = 1,7-decanediol + oxidized [NADPH--hemoprotein reductase] + H2O + H(+). It catalyses the reaction dodecan-1-ol + reduced [NADPH--hemoprotein reductase] + O2 = 1,5-dodecanediol + oxidized [NADPH--hemoprotein reductase] + H2O + H(+). The enzyme catalyses dodecan-1-ol + reduced [NADPH--hemoprotein reductase] + O2 = 1,4-dodecanediol + oxidized [NADPH--hemoprotein reductase] + H2O + H(+). The catalysed reaction is dodecan-1-ol + reduced [NADPH--hemoprotein reductase] + O2 = 1,6-dodecanediol + oxidized [NADPH--hemoprotein reductase] + H2O + H(+). Self-sufficient cytochrome P450 monooxygenase that catalyzes the regioselective in-chain hydroxylation of alkanes, fatty alcohols, and fatty acids at the omega-7 position. Performs hydroxylation of C10-C16 n-alkanes and C12 and C14 fatty alcohols; and thereby enables the one step biocatalytic synthesis of rare alcohols such as 5-dodecanol and 7-tetradecanol. Converts 1-dodecanol into 1,5-dodecanediol as major product with very little sub-terminally hydroxylated products with the 1,4-dodecanediol and 1,6-dodecanediol more abundant. Does not use hexadecanediol nor decanoic acid as substrates. Converts dodecanoic acid to 5-hydroxydodecanoic acid which can be further converted into delta-dodecalactone by lactonization of the 5-hydroxy acid at low pH. Also gives sub-terminal hydroxylation of dodecanoic acid with 9-hydroxydodecanoic acid being the second most abundant product. The C14 and C16 fatty acids are double hydroxylated to yield dihydroxy acids hydroxylated at both the omega-7 position and a sub-terminal position (omega-1, omega-2, or omega-3). This chain is Self-sufficient cytochrome P450 monooxygenase CYP505E3, found in Aspergillus terreus (strain NIH 2624 / FGSC A1156).